A 190-amino-acid polypeptide reads, in one-letter code: Apolipoprotein M (190 aa).

The not cleaved signal peptide spans 1–22 (MFHQVWAALLSLYGLLFNSMNQ). Disulfide bonds link C23-C169, C95-C185, and C130-C159. Tetradecanoate is bound by residues E138 and R145.

Belongs to the calycin superfamily. Lipocalin family. Highly divergent. In terms of assembly, interacts with LRP2; LRP2 mediates APOM renal uptake and subsequent lysosomal degradation. Expressed by the liver; secreted in plasma.

It is found in the secreted. Probably involved in lipid transport. Can bind sphingosine-1-phosphate, myristic acid, palmitic acid and stearic acid, retinol, all-trans-retinoic acid and 9-cis-retinoic acid. The sequence is that of Apolipoprotein M (Apom) from Mus musculus (Mouse).